Here is a 475-residue protein sequence, read N- to C-terminus: Glycogen synthase (475 aa).

An ADP-alpha-D-glucose-binding site is contributed by lysine 15.

Belongs to the glycosyltransferase 1 family. Bacterial/plant glycogen synthase subfamily.

The catalysed reaction is [(1-&gt;4)-alpha-D-glucosyl](n) + ADP-alpha-D-glucose = [(1-&gt;4)-alpha-D-glucosyl](n+1) + ADP + H(+). The protein operates within glycan biosynthesis; glycogen biosynthesis. Functionally, synthesizes alpha-1,4-glucan chains using ADP-glucose. The polypeptide is Glycogen synthase (Chlamydia caviae (strain ATCC VR-813 / DSM 19441 / 03DC25 / GPIC) (Chlamydophila caviae)).